Reading from the N-terminus, the 252-residue chain is uncharacterized protein (252 aa).

Positions 13–247 (ITLENVNKWY…PKSERTRAFL (235 aa)) constitute an ABC transporter domain. 45–52 (GPSGSGKS) contacts ATP.

The protein belongs to the ABC transporter superfamily.

The protein resides in the cell inner membrane. Probably part of a binding-protein-dependent transport system YdhWXYZ for an amino acid. Probably responsible for energy coupling to the transport system. This is an uncharacterized protein from Escherichia coli (strain K12).